A 485-amino-acid polypeptide reads, in one-letter code: Protein nucleotidyltransferase YdiU (485 aa).

The ATP site is built by G100, G102, R103, K123, D135, G136, R189, and R196. D265 functions as the Proton acceptor in the catalytic mechanism. Positions 266 and 275 each coordinate Mg(2+). D275 lines the ATP pocket.

The protein belongs to the SELO family. The cofactor is Mg(2+). Mn(2+) is required as a cofactor.

The catalysed reaction is L-seryl-[protein] + ATP = 3-O-(5'-adenylyl)-L-seryl-[protein] + diphosphate. The enzyme catalyses L-threonyl-[protein] + ATP = 3-O-(5'-adenylyl)-L-threonyl-[protein] + diphosphate. It carries out the reaction L-tyrosyl-[protein] + ATP = O-(5'-adenylyl)-L-tyrosyl-[protein] + diphosphate. It catalyses the reaction L-histidyl-[protein] + UTP = N(tele)-(5'-uridylyl)-L-histidyl-[protein] + diphosphate. The catalysed reaction is L-seryl-[protein] + UTP = O-(5'-uridylyl)-L-seryl-[protein] + diphosphate. The enzyme catalyses L-tyrosyl-[protein] + UTP = O-(5'-uridylyl)-L-tyrosyl-[protein] + diphosphate. In terms of biological role, nucleotidyltransferase involved in the post-translational modification of proteins. It can catalyze the addition of adenosine monophosphate (AMP) or uridine monophosphate (UMP) to a protein, resulting in modifications known as AMPylation and UMPylation. The sequence is that of Protein nucleotidyltransferase YdiU from Trichormus variabilis (strain ATCC 29413 / PCC 7937) (Anabaena variabilis).